The sequence spans 450 residues: Phosphoglucosamine mutase (450 aa).

Serine 102 acts as the Phosphoserine intermediate in catalysis. Mg(2+) contacts are provided by serine 102, aspartate 244, aspartate 246, and aspartate 248. At serine 102 the chain carries Phosphoserine.

This sequence belongs to the phosphohexose mutase family. It depends on Mg(2+) as a cofactor. Activated by phosphorylation.

The catalysed reaction is alpha-D-glucosamine 1-phosphate = D-glucosamine 6-phosphate. In terms of biological role, catalyzes the conversion of glucosamine-6-phosphate to glucosamine-1-phosphate. The chain is Phosphoglucosamine mutase from Nitratidesulfovibrio vulgaris (strain DSM 19637 / Miyazaki F) (Desulfovibrio vulgaris).